Consider the following 194-residue polypeptide: MHNLIPTVIENTGNYERVFDIYSRLLRERIIFLSGEINDPKADTVIAQLLFLESEDSSKDIYLYLNSPGGSITAGLAIYDTMQYIKPDVRTICIGQAASMGAFLLAGGAKGKRESLTYSRIMIHQPWGGISGQASDINIQANEILRLKKLIIDIMSNQIGVDKEKLALDMERDYFMTSSDALKYGLIDSILVRE.

Ser-99 acts as the Nucleophile in catalysis. His-124 is an active-site residue.

This sequence belongs to the peptidase S14 family. In terms of assembly, fourteen ClpP subunits assemble into 2 heptameric rings which stack back to back to give a disk-like structure with a central cavity, resembling the structure of eukaryotic proteasomes.

The protein resides in the cytoplasm. It carries out the reaction Hydrolysis of proteins to small peptides in the presence of ATP and magnesium. alpha-casein is the usual test substrate. In the absence of ATP, only oligopeptides shorter than five residues are hydrolyzed (such as succinyl-Leu-Tyr-|-NHMec, and Leu-Tyr-Leu-|-Tyr-Trp, in which cleavage of the -Tyr-|-Leu- and -Tyr-|-Trp bonds also occurs).. Functionally, cleaves peptides in various proteins in a process that requires ATP hydrolysis. Has a chymotrypsin-like activity. Plays a major role in the degradation of misfolded proteins. In Borreliella burgdorferi (strain ATCC 35210 / DSM 4680 / CIP 102532 / B31) (Borrelia burgdorferi), this protein is ATP-dependent Clp protease proteolytic subunit 1.